A 115-amino-acid chain; its full sequence is Protein V2 (115 aa).

The protein belongs to the geminiviridae protein AV2/V2 family. As to quaternary structure, interacts with host SGS3.

Its subcellular location is the host cytoplasm. The protein resides in the host perinuclear region. In terms of biological role, through its interaction with host SGS3, acts as a suppressor of RNA-mediated gene silencing, also known as post-transcriptional gene silencing (PTGS), a mechanism of plant viral defense that limits the accumulation of viral RNAs. This is Protein V2 from Tomato yellow leaf curl Sardinia virus (TYLCSV).